Consider the following 818-residue polypeptide: Probable beta-glucosidase I (818 aa).

N-linked (GlcNAc...) asparagine glycosylation occurs at N176. Residue D204 is part of the active site. The region spanning 374 to 534 is the PA14 domain; sequence DGKPGFTFRV…SQEELISNAV (161 aa). N453 and N472 each carry an N-linked (GlcNAc...) asparagine glycan.

It belongs to the glycosyl hydrolase 3 family.

It localises to the secreted. The catalysed reaction is Hydrolysis of terminal, non-reducing beta-D-glucosyl residues with release of beta-D-glucose.. It functions in the pathway glycan metabolism; cellulose degradation. In terms of biological role, beta-glucosidases are one of a number of cellulolytic enzymes involved in the degradation of cellulosic biomass. Catalyzes the last step releasing glucose from the inhibitory cellobiose. This chain is Probable beta-glucosidase I (bglI), found in Aspergillus niger (strain ATCC MYA-4892 / CBS 513.88 / FGSC A1513).